A 171-amino-acid polypeptide reads, in one-letter code: Crossover junction endodeoxyribonuclease RuvC (171 aa).

Residues D11, E71, and D143 contribute to the active site. Residues D11, E71, and D143 each contribute to the Mg(2+) site.

It belongs to the RuvC family. As to quaternary structure, homodimer which binds Holliday junction (HJ) DNA. The HJ becomes 2-fold symmetrical on binding to RuvC with unstacked arms; it has a different conformation from HJ DNA in complex with RuvA. In the full resolvosome a probable DNA-RuvA(4)-RuvB(12)-RuvC(2) complex forms which resolves the HJ. Mg(2+) serves as cofactor.

The protein localises to the cytoplasm. The catalysed reaction is Endonucleolytic cleavage at a junction such as a reciprocal single-stranded crossover between two homologous DNA duplexes (Holliday junction).. The RuvA-RuvB-RuvC complex processes Holliday junction (HJ) DNA during genetic recombination and DNA repair. Endonuclease that resolves HJ intermediates. Cleaves cruciform DNA by making single-stranded nicks across the HJ at symmetrical positions within the homologous arms, yielding a 5'-phosphate and a 3'-hydroxyl group; requires a central core of homology in the junction. The consensus cleavage sequence is 5'-(A/T)TT(C/G)-3'. Cleavage occurs on the 3'-side of the TT dinucleotide at the point of strand exchange. HJ branch migration catalyzed by RuvA-RuvB allows RuvC to scan DNA until it finds its consensus sequence, where it cleaves and resolves the cruciform DNA. The chain is Crossover junction endodeoxyribonuclease RuvC from Bartonella tribocorum (strain CIP 105476 / IBS 506).